Consider the following 374-residue polypeptide: All-trans-retinol dehydrogenase [NAD(+)] ADH7 (374 aa).

Zn(2+)-binding residues include Cys47, His68, Cys98, Cys101, Cys104, Cys112, and Cys174. Residues 199–204 (GLGGVG), Asp223, Lys228, 292–294 (VGA), and Arg369 each bind NAD(+).

This sequence belongs to the zinc-containing alcohol dehydrogenase family. Class-IV subfamily. Homodimer. It depends on Zn(2+) as a cofactor. As to expression, high expression in the stomach mucosa. Lower expression in eye, thymus, skin and ovary. Very low expression in small intestine, liver and uterus.

The protein resides in the cytoplasm. The catalysed reaction is a primary alcohol + NAD(+) = an aldehyde + NADH + H(+). The enzyme catalyses 10-hydroxydecanoate + NAD(+) = 10-oxodecanoate + NADH + H(+). It catalyses the reaction all-trans-retinol + NAD(+) = all-trans-retinal + NADH + H(+). It carries out the reaction 9-cis-retinol + NAD(+) = 9-cis-retinal + NADH + H(+). The catalysed reaction is all-trans-3,4-didehydroretinol + NAD(+) = all-trans-3,4-didehydroretinal + NADH + H(+). The enzyme catalyses all-trans-4-hydroxyretinol + NAD(+) = all-trans-4-hydroxyretinal + NADH + H(+). It catalyses the reaction all-trans-4-oxoretinol + NAD(+) = all-trans-4-oxoretinal + NADH + H(+). It carries out the reaction 12-hydroxydodecanoate + NAD(+) = 12-oxododecanoate + NADH + H(+). The catalysed reaction is 16-hydroxyhexadecanoate + NAD(+) = 16-oxohexadecanoate + NADH + H(+). The enzyme catalyses hexan-1-ol + NAD(+) = hexanal + NADH + H(+). It catalyses the reaction (E)-hex-2-en-1-ol + NAD(+) = (E)-hex-2-enal + NADH + H(+). It carries out the reaction (E)-4-hydroxynon-2-en-1-ol + NAD(+) = (E)-4-hydroxynon-2-enal + NADH + H(+). With respect to regulation, retinol oxidation is inhibited by the detergent Tween 80. Ethanol inhibits both all-trans-retinol and 9-cis-retinol oxidation. 13-cis-retinol is an effective competitive inhibitor of the 9-cis-retinol oxidation. All-trans-retinoic acid is a powerful inhibitor of all-trans-retinol oxidation. 13-cis-retinoic acid is a powerful inhibitor of all-trans-retinol oxidation. Cimetidine competitively inhibited ethanol oxidation. Catalyzes the NAD-dependent oxidation of all-trans-retinol, alcohol, aldehyde and omega-hydroxy fatty acids and their derivatives. Oxidizes preferentially all trans-retinol, all-trans-4-hydroxyretinol, 9-cis-retinol, 2-hexenol, and long chain omega-hydroxy fatty acids such as juniperic acid. In vitro can also catalyze the NADH-dependent reduction of all-trans-retinal and aldehydes and their derivatives. Reduces preferentially all trans-retinal, all-trans-4-oxoretinal and hexanal. Catalyzes in the oxidative direction with higher efficiency. Therefore may participate in retinoid metabolism, fatty acid omega-oxidation, and elimination of cytotoxic aldehydes produced by lipid peroxidation. In Mus musculus (Mouse), this protein is All-trans-retinol dehydrogenase [NAD(+)] ADH7 (Adh7).